We begin with the raw amino-acid sequence, 326 residues long: MIKDSSVQVEGQEKVCLDQWVAHYRTYAAKGRSASYIPALGEINVSQLGICIVKPDGTMIKSGDWEIPFTLQSISKVIGFIAACLSRGISYVLERVDVEPTGDAFNSIIRLEIHKPGKPFNPMINAGAITIASLLPGTSVQEKLESIYVLIEKMIEKRPAINEIVFQSEWETAHRNRALAYYLKENGFLESDVEETLEVYLKQCSIEINTEDIALIGLILAHDGYHPIRKEQVLPKEVARLTKALMLTCGMYNASGKFAAFIGLPAKSGVSGGIMTLVPSKSRKDLSFQDGCGIGIYGPAIDEYGNSLPGIMLLEHIAKEWDLSIF.

The substrate site is built by Ser73, Asn125, Glu169, Asn176, Tyr200, Tyr252, and Val270.

The protein belongs to the glutaminase family. As to quaternary structure, homotetramer.

It carries out the reaction L-glutamine + H2O = L-glutamate + NH4(+). This Bacillus anthracis protein is Glutaminase 2.